The chain runs to 154 residues: Probable cyclic pyranopterin monophosphate synthase (154 aa).

Residues 74–76 (LCH) and 110–111 (ME) contribute to the substrate site. Residue D125 is part of the active site.

It belongs to the MoaC family. Homohexamer; trimer of dimers.

The enzyme catalyses (8S)-3',8-cyclo-7,8-dihydroguanosine 5'-triphosphate = cyclic pyranopterin phosphate + diphosphate. Its pathway is cofactor biosynthesis; molybdopterin biosynthesis. Its function is as follows. Catalyzes the conversion of (8S)-3',8-cyclo-7,8-dihydroguanosine 5'-triphosphate to cyclic pyranopterin monophosphate (cPMP). This chain is Probable cyclic pyranopterin monophosphate synthase, found in Methanosphaerula palustris (strain ATCC BAA-1556 / DSM 19958 / E1-9c).